A 396-amino-acid chain; its full sequence is Diels-Alderase mpsD (396 aa).

It belongs to the Diels-Alderase family.

The protein operates within secondary metabolite biosynthesis. Diels-Alderase; part of the gene cluster that mediates the biosynthesis of macrophasetins, 3-decalinoyltetramic acids (DTAs) which feature a tetramate (pyrrolidine-2,4-dione) unit connected to a decalin fragment and that have potent bioactivities. The PKS-NRPS mpsA together with its associated enoylreductase partner mpsG incorporate one unit of acetyl-CoA, seven units of malonyl-CoA, and one unit of L-alanine to assemble the linear tetramic acid intermediate corresponding to the backbone of macrophasetins. Without the Diels-Alderase mpsD, the mpsA/G product can undergo the non-enzymatic intramolecular Diels-Alder (IMDA) reaction to generate both macrophasetin A and macrophasetin B. Catalyzed by mpsD, the linear tetramic acid intermediate is thoroughly converted to macrophasetin A via the endo-IMDA reaction in a regioselective and stereoselective manner. Finally, the cytochrome P450 monooxygenase mpsF catalyzes the hydroxylation at C20 to yield the end product macrophasetin C. This Macrophomina phaseolina (strain MS6) (Charcoal rot fungus) protein is Diels-Alderase mpsD.